A 229-amino-acid chain; its full sequence is Uracil-DNA glycosylase (229 aa).

Aspartate 65 serves as the catalytic Proton acceptor.

Belongs to the uracil-DNA glycosylase (UDG) superfamily. UNG family.

The protein resides in the cytoplasm. It carries out the reaction Hydrolyzes single-stranded DNA or mismatched double-stranded DNA and polynucleotides, releasing free uracil.. Its function is as follows. Excises uracil residues from the DNA which can arise as a result of misincorporation of dUMP residues by DNA polymerase or due to deamination of cytosine. This is Uracil-DNA glycosylase from Limosilactobacillus fermentum (strain NBRC 3956 / LMG 18251) (Lactobacillus fermentum).